The following is a 37-amino-acid chain: Large ribosomal subunit protein bL36 (37 aa).

It belongs to the bacterial ribosomal protein bL36 family.

The chain is Large ribosomal subunit protein bL36 from Treponema pallidum (strain Nichols).